A 288-amino-acid chain; its full sequence is Bifunctional protein FolD (288 aa).

NADP(+) is bound by residues 166–168 (GAS) and isoleucine 232.

This sequence belongs to the tetrahydrofolate dehydrogenase/cyclohydrolase family. Homodimer.

The enzyme catalyses (6R)-5,10-methylene-5,6,7,8-tetrahydrofolate + NADP(+) = (6R)-5,10-methenyltetrahydrofolate + NADPH. It catalyses the reaction (6R)-5,10-methenyltetrahydrofolate + H2O = (6R)-10-formyltetrahydrofolate + H(+). The protein operates within one-carbon metabolism; tetrahydrofolate interconversion. Catalyzes the oxidation of 5,10-methylenetetrahydrofolate to 5,10-methenyltetrahydrofolate and then the hydrolysis of 5,10-methenyltetrahydrofolate to 10-formyltetrahydrofolate. In Salmonella arizonae (strain ATCC BAA-731 / CDC346-86 / RSK2980), this protein is Bifunctional protein FolD.